The following is a 245-amino-acid chain: Leucyl/phenylalanyl-tRNA--protein transferase (245 aa).

The protein belongs to the L/F-transferase family.

The protein localises to the cytoplasm. It catalyses the reaction N-terminal L-lysyl-[protein] + L-leucyl-tRNA(Leu) = N-terminal L-leucyl-L-lysyl-[protein] + tRNA(Leu) + H(+). The enzyme catalyses N-terminal L-arginyl-[protein] + L-leucyl-tRNA(Leu) = N-terminal L-leucyl-L-arginyl-[protein] + tRNA(Leu) + H(+). The catalysed reaction is L-phenylalanyl-tRNA(Phe) + an N-terminal L-alpha-aminoacyl-[protein] = an N-terminal L-phenylalanyl-L-alpha-aminoacyl-[protein] + tRNA(Phe). In terms of biological role, functions in the N-end rule pathway of protein degradation where it conjugates Leu, Phe and, less efficiently, Met from aminoacyl-tRNAs to the N-termini of proteins containing an N-terminal arginine or lysine. In Paraburkholderia xenovorans (strain LB400), this protein is Leucyl/phenylalanyl-tRNA--protein transferase.